The chain runs to 104 residues: Transcription and mRNA export factor ENY2 (104 aa).

Basic and acidic residues predominate over residues 1–14 (MADYGSDKKSRDNQ). A disordered region spans residues 1-22 (MADYGSDKKSRDNQMRSAINQQ).

It belongs to the ENY2 family. As to quaternary structure, component of the nuclear pore complex (NPC)-associated TREX-2 complex (transcription and export complex 2). Component of the SAGA transcription coactivator-HAT complex. Within the SAGA complex, participates in a subcomplex of SAGA called the DUB module (deubiquitination module).

The protein localises to the nucleus. Its subcellular location is the nucleoplasm. Involved in mRNA export coupled transcription activation by association with both the TREX-2 and the SAGA complexes. The transcription regulatory histone acetylation (HAT) complex SAGA is a multiprotein complex that activates transcription by remodeling chromatin and mediating histone acetylation and deubiquitination. Within the SAGA complex, participates in a subcomplex that specifically deubiquitinates histones. The SAGA complex is recruited to specific gene promoters by activators, where it is required for transcription. The TREX-2 complex functions in docking export-competent ribonucleoprotein particles (mRNPs) to the nuclear entrance of the nuclear pore complex (nuclear basket). TREX-2 participates in mRNA export and accurate chromatin positioning in the nucleus by tethering genes to the nuclear periphery. This Ciona intestinalis (Transparent sea squirt) protein is Transcription and mRNA export factor ENY2.